Here is a 717-residue protein sequence, read N- to C-terminus: Aryl hydrocarbon receptor nuclear translocator 2 (717 aa).

2 disordered regions span residues 1–20 (MATPAAVNPPEMASDIPGSV) and 35–74 (MAGAMPARGGKRRSGMDFDDEDGEGPSKFSRENHSEIERR). At R42 the chain carries Omega-N-methylarginine. The segment covering 63–73 (FSRENHSEIER) has biased composition (basic and acidic residues). One can recognise a bHLH domain in the interval 63–116 (FSRENHSEIERRRRNKMTQYITELSDMVPTCSALARKPDKLTILRMAVSHMKSM). PAS domains are found at residues 134–209 (TEQE…MTGR) and 323–393 (PVCM…VKLK). Residues 398–441 (SVMYRFRTKNREWMLIRTSSFTFQNPYSDEIEYIICTNTNVKQL) enclose the PAC domain. A disordered region spans residues 548–717 (NDIQSSSSTG…DLGMFPPFSE (170 aa)). Polar residues-rich tracts occupy residues 549–574 (DIQSSSSTGQNMSQISRQLNQSQVAW) and 585–605 (QIPSQSSKTQSSPFGIGTSHT). Residues 610–625 (PSSYSPLSSPATSSPS) are compositionally biased toward low complexity. Positions 642–651 (SGQSSGQFQG) are enriched in polar residues. The span at 658–680 (SQWQSQHHGQQSGEQHSHQQPGQ) shows a compositional bias: low complexity.

Efficient DNA binding requires dimerization with another bHLH protein. Heterodimer with NPAS4. Heterodimer with SIM1. Heterodimer with the aryl hydrocarbon receptor (AHR) or the SIM1 protein. Interacts with TACC3.

The protein resides in the nucleus. In terms of biological role, transcription factor that plays a role in the development of the hypothalamo-pituitary axis, postnatal brain growth, and visual and renal function. Specifically recognizes the xenobiotic response element (XRE). This chain is Aryl hydrocarbon receptor nuclear translocator 2 (ARNT2), found in Homo sapiens (Human).